The primary structure comprises 347 residues: UPF0284 protein M164_0030 (347 aa).

Belongs to the UPF0284 family.

The polypeptide is UPF0284 protein M164_0030 (Saccharolobus islandicus (strain M.16.4 / Kamchatka #3) (Sulfolobus islandicus)).